The following is a 545-amino-acid chain: CWF19-like protein 1 homolog (545 aa).

The interval Tyr306–Pro329 is disordered.

It belongs to the CWF19 family.

The sequence is that of CWF19-like protein 1 homolog from Drosophila melanogaster (Fruit fly).